Consider the following 307-residue polypeptide: Protoheme IX farnesyltransferase (307 aa).

8 helical membrane passes run 32 to 52, 54 to 74, 105 to 125, 126 to 146, 169 to 189, 222 to 242, 244 to 264, and 287 to 307; these read VVELLLVTTVPTMILAARGIP, LWLVLATVVGGYMSAGSAGAF, LVFAWALGVASVLVLGFFTNW, LAAGLSVAAILIYVVFYTLIL, WAVVTNSVGWAPVILFGVIFL, VVGLQVVLYAWAMVACSLLLI, VARMGVLYTAVALVAGGWFLY, and GSIAYLTLIFLAVAIDPLLPF.

It belongs to the UbiA prenyltransferase family. Protoheme IX farnesyltransferase subfamily.

It is found in the cell membrane. It carries out the reaction heme b + (2E,6E)-farnesyl diphosphate + H2O = Fe(II)-heme o + diphosphate. Its pathway is porphyrin-containing compound metabolism; heme O biosynthesis; heme O from protoheme: step 1/1. Converts heme B (protoheme IX) to heme O by substitution of the vinyl group on carbon 2 of heme B porphyrin ring with a hydroxyethyl farnesyl side group. This Leifsonia xyli subsp. xyli (strain CTCB07) protein is Protoheme IX farnesyltransferase.